The chain runs to 307 residues: UDP-N-acetylenolpyruvoylglucosamine reductase (307 aa).

The FAD-binding PCMH-type domain occupies 33–197 (TGGNADFYIT…LEAAFTLAPG (165 aa)). Arg-176 is a catalytic residue. Ser-226 (proton donor) is an active-site residue. The active site involves Glu-296.

This sequence belongs to the MurB family. It depends on FAD as a cofactor.

It is found in the cytoplasm. It carries out the reaction UDP-N-acetyl-alpha-D-muramate + NADP(+) = UDP-N-acetyl-3-O-(1-carboxyvinyl)-alpha-D-glucosamine + NADPH + H(+). Its pathway is cell wall biogenesis; peptidoglycan biosynthesis. In terms of biological role, cell wall formation. This chain is UDP-N-acetylenolpyruvoylglucosamine reductase, found in Staphylococcus aureus (strain Mu3 / ATCC 700698).